We begin with the raw amino-acid sequence, 251 residues long: MCSAPNGRKNRPRSAANIFQIGKSSVRDPERRESTESARRAQRAMDDCRTTVQEFNTLVALHREQVISIGENTTDCPSLRAQMHKTRVKGCAVAQAAYQNLIAISGPEDGEIHPEICRLFIQLQCCLEMYITEMLKSMCLLGVLQLHRKGNDMCPELNMDCRVDESSDVPMLEDRSSSPMDFPQDSWVVCADIENIESDMREMRNLLSKLRETMPLPLKNQDDSSLLNLTPYPLVRQRKRRFSGLCCLVSG.

A disordered region spans residues 1-43 (MCSAPNGRKNRPRSAANIFQIGKSSVRDPERRESTESARRAQR). Residues 25 to 43 (SVRDPERRESTESARRAQR) are compositionally biased toward basic and acidic residues. S-palmitoyl cysteine attachment occurs at residues Cys-246 and Cys-247.

The protein belongs to the RGS7BP/RGS9BP family. In terms of processing, palmitoylated. Undergoes rapid palmitoylation turnover. Palmitoylation regulates the cell membrane and nuclear shuttling and the regulation of GPCR signaling. Upon depalmitoylation, it is targeted from the plasma membrane into the nucleus. GPCR signaling inhibits depalmitoylation and promotes localization to the plasma membrane.

It is found in the nucleus. Its subcellular location is the cytoplasm. The protein localises to the cell membrane. Its function is as follows. Regulator of G protein-coupled receptor (GPCR) signaling. Regulatory subunit of the R7-Gbeta5 complexes that acts by controlling the subcellular location of the R7-Gbeta5 complexes. When palmitoylated, it targets the R7-Gbeta5 complexes to the plasma membrane, leading to inhibit G protein alpha subunits. When it is unpalmitoylated, the R7-Gbeta5 complexes undergo a nuclear/cytoplasmic shuttling. The polypeptide is Regulator of G-protein signaling 7-binding protein B (rgs7bpb) (Danio rerio (Zebrafish)).